Reading from the N-terminus, the 36-residue chain is Adenylate kinase (36 aa).

ATP is bound at residue 10-15 (GAGKGT). The segment at 30-36 (ATGDLFR) is NMP. AMP-binding residues include threonine 31 and arginine 36.

It belongs to the adenylate kinase family. As to quaternary structure, monomer.

It is found in the cytoplasm. It carries out the reaction AMP + ATP = 2 ADP. Its pathway is purine metabolism; AMP biosynthesis via salvage pathway; AMP from ADP: step 1/1. Its function is as follows. Catalyzes the reversible transfer of the terminal phosphate group between ATP and AMP. Plays an important role in cellular energy homeostasis and in adenine nucleotide metabolism. The polypeptide is Adenylate kinase (adk) (Streptomyces griseus).